We begin with the raw amino-acid sequence, 477 residues long: Enolase 1, chloroplastic (477 aa).

A chloroplast-targeting transit peptide spans 1-41; that stretch reads MALTTKPHHLQRSFLSPSRVSGERYLESAPSCLRFRRSGVQ. Residues His-203 and Glu-212 each coordinate substrate. Glu-255 serves as the catalytic Proton donor. Mg(2+)-binding residues include Asp-290, Glu-340, and Asp-365. Substrate contacts are provided by Glu-340 and Asp-365. Residue Lys-390 is the Proton acceptor of the active site. Residues 417–420 and Lys-441 contribute to the substrate site; that span reads SHRS. Ser-476 carries the phosphoserine modification.

This sequence belongs to the enolase family. Requires Mg(2+) as cofactor. In terms of tissue distribution, highly expressed in young roots, young siliques, and shoot apex. Lowly expressed in young leaves, stems and cotyledons.

It localises to the plastid. The protein resides in the chloroplast. It catalyses the reaction (2R)-2-phosphoglycerate = phosphoenolpyruvate + H2O. The protein operates within carbohydrate degradation; glycolysis; pyruvate from D-glyceraldehyde 3-phosphate: step 4/5. In Arabidopsis thaliana (Mouse-ear cress), this protein is Enolase 1, chloroplastic (ENO1).